A 137-amino-acid polypeptide reads, in one-letter code: Putative pre-16S rRNA nuclease (137 aa).

Belongs to the YqgF nuclease family.

It is found in the cytoplasm. Its function is as follows. Could be a nuclease involved in processing of the 5'-end of pre-16S rRNA. In Clostridium perfringens (strain ATCC 13124 / DSM 756 / JCM 1290 / NCIMB 6125 / NCTC 8237 / Type A), this protein is Putative pre-16S rRNA nuclease.